The chain runs to 158 residues: MNVIEGVVATPDARVAIAIARFNHFINDSLLEGAIDALKRIGQVKDENITVVWVPGAYELPLTVRALTKSAKNGGYDAVIALGTVIRGGTAHFEFVAGECSSGLSSVAMDSEIPVAFGVLTTESIEQAIERAGTKAGNKGAEAALTALEMINVLKAIK.

Residues Phe22, Ala57–Glu59, and Thr84–Ile86 contribute to the 5-amino-6-(D-ribitylamino)uracil site. Gly89–Thr90 lines the (2S)-2-hydroxy-3-oxobutyl phosphate pocket. His92 functions as the Proton donor in the catalytic mechanism. 5-amino-6-(D-ribitylamino)uracil is bound at residue Phe117. A (2S)-2-hydroxy-3-oxobutyl phosphate-binding site is contributed by Arg131.

The protein belongs to the DMRL synthase family. As to quaternary structure, forms an icosahedral capsid composed of 60 subunits, arranged as a dodecamer of pentamers.

The enzyme catalyses (2S)-2-hydroxy-3-oxobutyl phosphate + 5-amino-6-(D-ribitylamino)uracil = 6,7-dimethyl-8-(1-D-ribityl)lumazine + phosphate + 2 H2O + H(+). The protein operates within cofactor biosynthesis; riboflavin biosynthesis; riboflavin from 2-hydroxy-3-oxobutyl phosphate and 5-amino-6-(D-ribitylamino)uracil: step 1/2. Catalyzes the formation of 6,7-dimethyl-8-ribityllumazine by condensation of 5-amino-6-(D-ribitylamino)uracil with 3,4-dihydroxy-2-butanone 4-phosphate. This is the penultimate step in the biosynthesis of riboflavin. In Pectobacterium carotovorum subsp. carotovorum (strain PC1), this protein is 6,7-dimethyl-8-ribityllumazine synthase.